The sequence spans 126 residues: UPF0292 protein TSIB_0423 (126 aa).

Residues 20–100 (NGVILVEGMR…RVDTNTRREL (81 aa)) enclose the Toprim domain. Glu-26, Asp-69, and Asp-71 together coordinate Mg(2+).

The protein belongs to the UPF0292 family. It depends on Mg(2+) as a cofactor.

The polypeptide is UPF0292 protein TSIB_0423 (Thermococcus sibiricus (strain DSM 12597 / MM 739)).